A 274-amino-acid chain; its full sequence is Urease accessory protein UreD (274 aa).

This sequence belongs to the UreD family. In terms of assembly, ureD, UreF and UreG form a complex that acts as a GTP-hydrolysis-dependent molecular chaperone, activating the urease apoprotein by helping to assemble the nickel containing metallocenter of UreC. The UreE protein probably delivers the nickel.

The protein resides in the cytoplasm. Its function is as follows. Required for maturation of urease via the functional incorporation of the urease nickel metallocenter. This chain is Urease accessory protein UreD, found in Thermosynechococcus vestitus (strain NIES-2133 / IAM M-273 / BP-1).